Here is a 99-residue protein sequence, read N- to C-terminus: Biogenesis of lysosome-related organelles complex 1 subunit SNN1 (99 aa).

A coiled-coil region spans residues 34–94 (SINELRESQA…VVLKRYEKMV (61 aa)).

This sequence belongs to the SNAPIN family. In terms of assembly, component of the biogenesis of lysosome-related organelles complex-1 (BLOC-1).

The protein localises to the endosome. In terms of biological role, component of the biogenesis of lysosome-related organelles complex-1 (BLOC-1), a complex involved in endosomal cargo sorting. The protein is Biogenesis of lysosome-related organelles complex 1 subunit SNN1 (SNN1) of Kluyveromyces lactis (strain ATCC 8585 / CBS 2359 / DSM 70799 / NBRC 1267 / NRRL Y-1140 / WM37) (Yeast).